A 418-amino-acid polypeptide reads, in one-letter code: Sprouty-related, EVH1 domain-containing protein 2 (418 aa).

Positions 5–122 (THPDDDSYIV…RGVRKAIEDL (118 aa)) constitute a WH1 domain. Residues 127 to 171 (TTSSSTIHNEAELGDDDVFTTATDSSSNSSQKREQPTRTISSPTS) form a disordered region. The segment covering 146-156 (TTATDSSSNSS) has biased composition (polar residues). Positions 201-257 (PYRQVSFPDDDEEIVRINPREKIWMTGYEDYRHAPVRGKYPDPSEDADSSYVRFAKG) constitute a KBD domain. Position 206 is a phosphoserine (Ser-206). 2 positions are modified to phosphotyrosine: Tyr-228 and Tyr-231. Positions 275-302 (GLGEDPKGRGGSVIKTQPSRGKSRRRKE) are disordered. The SPR domain maps to 308–416 (RCVYCRDMFN…CRCCGGKHKA (109 aa)).

As to quaternary structure, homodimer and heterodimer. Able to interact with SPRED1 to form heterodimers. Interacts with RAS. May interact with ZDHHC13 (via ANK repeats) and ZDHHC17 (via ANK repeats). Interacts with TESK1. Interacts with NF1. Phosphorylated on serine and threonine residues. Phosphorylated on tyrosine. Phosphorylation of Tyr-228 and Tyr-231 are required for ubiquitination. Post-translationally, ubiquitinated; leading to degradation by the proteasome. In terms of tissue distribution, expressed in liver, skin, small intestine, salivary gland and prostate.

It localises to the cell membrane. The protein resides in the cytoplasmic vesicle. Its subcellular location is the secretory vesicle membrane. It is found in the cytoplasm. Negatively regulates Ras signaling pathways and downstream activation of MAP kinases. Recruits and translocates NF1 to the cell membrane, thereby enabling NF1-dependent hydrolysis of active GTP-bound Ras to inactive GDP-bound Ras. Inhibits fibroblast growth factor (FGF)-induced retinal lens fiber differentiation, probably by inhibiting FGF-mediated phosphorylation of ERK1/2. Inhibits TGFB-induced epithelial-to-mesenchymal transition in lens epithelial cells. This Homo sapiens (Human) protein is Sprouty-related, EVH1 domain-containing protein 2 (SPRED2).